A 595-amino-acid chain; its full sequence is MTALLFLGSLLMSLDLTLSAPPWKSKEFKDGAGDPSVVLTVDGKLCHFPFQYHRRLYHKCIHKGQPGSRPWCATTPNFDEDQQWGYCLEPKKVKDHCSKHSPCHKGGTCVNTPNGPHCLCPEHLTGKHCQREKCFESQLLKFFHENEIWFRTGPGGVARCQCKGPQAVCKLLTSQVCRVNPCLNGGTCLLVEDHRLCHCPAGYAGPFCDLDLKATCYEDRGLSYRGQAKTTLSGAPCQRWASEATYRNMTETQALSWGLGHHAFCRNPDNDTRPWCYVWSGDRLSWDYCDLEQCQMPTLTSPVSPESHDMLKPRPPILQSSPRDSTRNQNVVSRTSTVVCGQRFRKRLSSLRRVVGGLVALPGSHPYIAALYWGDSFCAGSLIDPCWVLTAAHCLQKRPAPEELTVVLGQDRHNQSCERCQTLAVHSYRLHEGFSSKTYQHDLALLRLRGRKNSCAILSPHVQPVCLPSSAAPPSETVLCEVAGWGHQFEGAEEYATFLQEAQVPFISLDRCSSSNVHGDAILPGMLCAGFLEGGADACQGDSGGPLVCDEGVTERQLTLRGVISWGSGCGDRNKPGVYTDVANYLDWIQEHTAF.

The N-terminal stretch at 1–19 (MTALLFLGSLLMSLDLTLS) is a signal peptide. In terms of domain architecture, Fibronectin type-II spans 41 to 89 (VDGKLCHFPFQYHRRLYHKCIHKGQPGSRPWCATTPNFDEDQQWGYCLE). 13 disulfide bridges follow: Cys46-Cys72, Cys60-Cys87, Cys97-Cys109, Cys103-Cys118, Cys120-Cys129, Cys134-Cys162, Cys160-Cys169, Cys177-Cys188, Cys182-Cys197, Cys199-Cys208, Cys216-Cys294, Cys237-Cys276, and Cys265-Cys289. An EGF-like 1 domain is found at 93–130 (VKDHCSKHSPCHKGGTCVNTPNGPHCLCPEHLTGKHCQ). An O-linked (Fuc) threonine glycan is attached at Thr108. The Fibronectin type-I domain occupies 132–172 (EKCFESQLLKFFHENEIWFRTGPGGVARCQCKGPQAVCKLL). Positions 173-209 (TSQVCRVNPCLNGGTCLLVEDHRLCHCPAGYAGPFCD) constitute an EGF-like 2 domain. Residues 215-294 (TCYEDRGLSY…SWDYCDLEQC (80 aa)) form the Kringle domain. A glycan (N-linked (GlcNAc...) asparagine) is linked at Asn248. The O-linked (GalNAc...) threonine glycan is linked to Thr298. The tract at residues 302–332 (PVSPESHDMLKPRPPILQSSPRDSTRNQNVV) is disordered. A glycan (O-linked (GalNAc...) serine) is linked at Ser307. The span at 318-332 (LQSSPRDSTRNQNVV) shows a compositional bias: polar residues. A glycan (O-linked (GalNAc...) threonine) is linked at Thr326. Intrachain disulfides connect Cys340–Cys466, Cys378–Cys394, Cys386–Cys455, Cys417–Cys420, Cys480–Cys549, Cys512–Cys528, and Cys539–Cys570. The 241-residue stretch at 354-594 (VVGGLVALPG…YLDWIQEHTA (241 aa)) folds into the Peptidase S1 domain. His393 (charge relay system) is an active-site residue. Asn414 carries N-linked (GlcNAc...) asparagine glycosylation. The active-site Charge relay system is the Asp442. The active-site Charge relay system is the Ser543.

Belongs to the peptidase S1 family. Interacts with HRG; the interaction, which is enhanced in the presence of zinc ions and inhibited by heparin-binding, inhibits factor XII autoactivation and contact-initiated coagulation. In terms of processing, O- and N-glycosylated.

It localises to the secreted. The enzyme catalyses Selective cleavage of Arg-|-Ile bonds in factor VII to form factor VIIa and factor XI to form factor XIa.. Activity is promoted in the presence of negatively charged surfaces. Factor XII is a serum glycoprotein that participates in the initiation of blood coagulation, fibrinolysis, and the generation of bradykinin and angiotensin. Prekallikrein is cleaved by factor XII to form kallikrein, which then cleaves factor XII first to alpha-factor XIIa and then trypsin cleaves it to beta-factor XIIa. Alpha-factor XIIa activates factor XI to factor XIa. This Rattus norvegicus (Rat) protein is Coagulation factor XII (F12).